We begin with the raw amino-acid sequence, 111 residues long: Nucleoid-associated protein CT0805 (111 aa).

This sequence belongs to the YbaB/EbfC family. As to quaternary structure, homodimer.

It localises to the cytoplasm. The protein localises to the nucleoid. In terms of biological role, binds to DNA and alters its conformation. May be involved in regulation of gene expression, nucleoid organization and DNA protection. This is Nucleoid-associated protein CT0805 from Chlorobaculum tepidum (strain ATCC 49652 / DSM 12025 / NBRC 103806 / TLS) (Chlorobium tepidum).